Here is a 342-residue protein sequence, read N- to C-terminus: Pre-mRNA-splicing factor 18 (342 aa).

Methionine 1 carries the post-translational modification N-acetylmethionine.

It belongs to the PRP18 family. Heterodimer with PPIH. Interacts with PRPF4 and with the spliceosome. Part of a complex containing U4/U6 snRNPs.

The protein localises to the nucleus speckle. Its function is as follows. Participates in the second step of pre-mRNA splicing. The polypeptide is Pre-mRNA-splicing factor 18 (PRPF18) (Bos taurus (Bovine)).